Reading from the N-terminus, the 385-residue chain is SH3 domain-binding protein 5-like (385 aa).

The interval 1–58 (MAELRQIPGGRETPQGELRPEVVEDEVPRSPVAEEPGGGGSNSSEAKLSPREEEELDP) is disordered. Thr-13 carries the phosphothreonine modification. The segment covering 18–28 (LRPEVVEDEVP) has biased composition (basic and acidic residues). Phosphoserine is present on residues Ser-30 and Ser-49. 2 coiled-coil regions span residues 59–140 (RIQE…YERA) and 169–272 (WQEM…EQIH). The tract at residues 272–328 (HARRRGQPAHTPGQRRSSPVGAEAGPDGGEDADSGIIEGAEGGGLEEGVSLGPGAAP) is disordered. The segment covering 318–328 (EGVSLGPGAAP) has biased composition (low complexity). Phosphoserine is present on residues Ser-343, Ser-350, Ser-358, and Ser-362. Positions 359 to 385 (DHTSLDGQELGPRSGGRGGRHQRSISL) are disordered. The span at 376–385 (GGRHQRSISL) shows a compositional bias: basic residues.

This sequence belongs to the SH3BP5 family.

In terms of biological role, functions as a guanine nucleotide exchange factor (GEF) for RAB11A. This chain is SH3 domain-binding protein 5-like (SH3BP5L), found in Bos taurus (Bovine).